The sequence spans 391 residues: Formate-dependent phosphoribosylglycinamide formyltransferase (391 aa).

Residues 20–21 and Glu-80 each bind N(1)-(5-phospho-beta-D-ribosyl)glycinamide; that span reads EL. ATP is bound by residues Arg-112, Lys-153, 158 to 163, 193 to 196, and Glu-201; these read SSGKGQ and EGFV. The 190-residue stretch at 117–306 folds into the ATP-grasp domain; that stretch reads RLAAETLGLP…EFALHVRAIL (190 aa). The Mg(2+) site is built by Glu-265 and Glu-277. N(1)-(5-phospho-beta-D-ribosyl)glycinamide-binding positions include Asp-284, Lys-354, and 361 to 362; that span reads RR.

It belongs to the PurK/PurT family. In terms of assembly, homodimer.

It catalyses the reaction N(1)-(5-phospho-beta-D-ribosyl)glycinamide + formate + ATP = N(2)-formyl-N(1)-(5-phospho-beta-D-ribosyl)glycinamide + ADP + phosphate + H(+). The protein operates within purine metabolism; IMP biosynthesis via de novo pathway; N(2)-formyl-N(1)-(5-phospho-D-ribosyl)glycinamide from N(1)-(5-phospho-D-ribosyl)glycinamide (formate route): step 1/1. Its function is as follows. Involved in the de novo purine biosynthesis. Catalyzes the transfer of formate to 5-phospho-ribosyl-glycinamide (GAR), producing 5-phospho-ribosyl-N-formylglycinamide (FGAR). Formate is provided by PurU via hydrolysis of 10-formyl-tetrahydrofolate. The sequence is that of Formate-dependent phosphoribosylglycinamide formyltransferase from Shewanella sp. (strain W3-18-1).